The chain runs to 605 residues: SET domain-containing protein SNOG_11806 (605 aa).

A disordered region spans residues 68–132 (TLDLTGMKTP…SRKGTGGLRV (65 aa)). Polar residues predominate over residues 75 to 89 (KTPQPSRSPTVTRNV). The segment covering 104–115 (ESADDDDDDLQD) has biased composition (acidic residues). The 107-residue stretch at 473–579 (PPVQIYRTAE…AGSEITVDYG (107 aa)) folds into the SET domain.

This sequence belongs to the class V-like SAM-binding methyltransferase superfamily.

In Phaeosphaeria nodorum (strain SN15 / ATCC MYA-4574 / FGSC 10173) (Glume blotch fungus), this protein is SET domain-containing protein SNOG_11806.